Reading from the N-terminus, the 360-residue chain is Sensor histidine kinase LiaS (360 aa).

Residues 1-15 (MRKKMLASLQWRAIR) are Cytoplasmic-facing. The helical transmembrane segment at 16–36 (MTTGISLLLFVCLISFMMFYY) threads the bilayer. Over 37–47 (RLDPLVLLSSS) the chain is Extracellular. Residues 48–68 (WFGIPFILILLLISVTVGFAS) form a helical membrane-spanning segment. The Cytoplasmic segment spans residues 69–360 (GYMYGNRLKT…ENERDSSIID (292 aa)). Positions 74-126 (NRLKTRIDTLIESILTFENGNFAYRIPPLGDDEIGLAADQLNEMAKRVELQVA) constitute an HAMP domain. A Histidine kinase domain is found at 153-346 (RLARDLHDAV…QIEVKVPIFP (194 aa)). Histidine 159 bears the Phosphohistidine; by autocatalysis mark.

The protein localises to the cell membrane. The enzyme catalyses ATP + protein L-histidine = ADP + protein N-phospho-L-histidine.. Member of the two-component regulatory system LiaS/LiaR probably involved in response to a subset of cell wall-active antibiotics that interfere with the lipid II cycle in the cytoplasmic membrane (bacitracin, nisin, ramoplanin and vancomycin). Also seems to be involved in response to cationic antimicrobial peptides and secretion stress. Activates probably LiaR by phosphorylation. The sequence is that of Sensor histidine kinase LiaS (liaS) from Bacillus subtilis (strain 168).